The following is a 592-amino-acid chain: A-type ATP synthase subunit A (592 aa).

233 to 240 (GPFGSGKT) is a binding site for ATP.

The protein belongs to the ATPase alpha/beta chains family. Has multiple subunits with at least A(3), B(3), C, D, E, F, H, I and proteolipid K(x).

It localises to the cell membrane. It carries out the reaction ATP + H2O + 4 H(+)(in) = ADP + phosphate + 5 H(+)(out). Its function is as follows. Component of the A-type ATP synthase that produces ATP from ADP in the presence of a proton gradient across the membrane. The A chain is the catalytic subunit. The polypeptide is A-type ATP synthase subunit A (Saccharolobus islandicus (strain L.S.2.15 / Lassen #1) (Sulfolobus islandicus)).